The chain runs to 691 residues: DNA ligase (691 aa).

Residues 41-45 (DAEYD), 90-91 (SL), and glutamate 130 contribute to the NAD(+) site. Catalysis depends on lysine 132, which acts as the N6-AMP-lysine intermediate. Residues arginine 153, glutamate 190, lysine 307, and lysine 331 each contribute to the NAD(+) site. Residues cysteine 425, cysteine 428, cysteine 443, and cysteine 449 each contribute to the Zn(2+) site. The 82-residue stretch at 610 to 691 (APQGVLAGKT…MHTLLEGHAR (82 aa)) folds into the BRCT domain.

It belongs to the NAD-dependent DNA ligase family. LigA subfamily. Mg(2+) serves as cofactor. Requires Mn(2+) as cofactor.

It carries out the reaction NAD(+) + (deoxyribonucleotide)n-3'-hydroxyl + 5'-phospho-(deoxyribonucleotide)m = (deoxyribonucleotide)n+m + AMP + beta-nicotinamide D-nucleotide.. In terms of biological role, DNA ligase that catalyzes the formation of phosphodiester linkages between 5'-phosphoryl and 3'-hydroxyl groups in double-stranded DNA using NAD as a coenzyme and as the energy source for the reaction. It is essential for DNA replication and repair of damaged DNA. The sequence is that of DNA ligase from Burkholderia pseudomallei (strain 1106a).